Reading from the N-terminus, the 1072-residue chain is MKSLKGRLLFLRKFVFFSLLILLFAHGASSSSSSFNYFDKRTNGKANNELALFSPTADSPSSVDGVLELPSAENVFAESSLYNAFIVATVDGSLHSYDRITGQELWSLFTNANPGLSYTKDENSLLSSKFLSQSNFKSYNSTHGEFYSDSTLNISYLSDDDTVWFVEPIDGGILYAFNLQTGLVRLPHSIKDLVHASPIRLLNNNVFVGSKNTTLFTIDVSNGDIVSQYPSGHRYETHHSVHNLGTKRDSVPSGADSDLSFKDPSGKKLSESLDLLDDFNYQVTVSNKSFVDIARTEYFITIYSDSNVILDLVYIDWTPTKNEIMYESFHSSSFDSKLALSSYDSSLHIVDTHSKFIKQNIPLMSPAATVFDIVTLPHNKKIDKSQTPAKFPTSVLLRQPIDTYLETMFPQIARNKTEHVYINHIGNAWFAMSERHYPLVSLAPEASFLYYNGFYIPLNSIFGLHSLMATPKPFFALPGLPGYDIPSYVESEGSTKTLPSIGKKPIPLLDPNPISSTPISITFWVIMFLSVSFTIVTFFSILRIRSSEVRPLKSQKNTVSINNKIDTSKRRRKGKRRKRVSDEHSASSNFNEIESQASFEQNQTLDILSENIVEIQDKSTDPLQKSLDSSLKSHLPEATVIQNTDGSVTVNSLTVYPEVIGYGSHGTIVYRGVYEDREVAVKRVLMEFYDLASREITLLQQSDNHPNIVRYYCKQKSDQFLYIVIELCKCNLSDLIEKPIAYDDLFKSIDLVSLLYQIAFGVSHLHSLDLVHRDLKPQNILLVVNNSPNLSKTRVRALISDFGLSKKLDFNQSSLRNTTFEAAGSYGWRSPEILSGSLSQQSKEIQVKTREGRIRQASHATDIFALGCIFYYTLTGGMHPFGSHYDCEGNILKGNYCLVHLQSLGECGVLAADLIEDMIAFEPSKRPTIEVVLNHPLFWDYAKKLDFLIDVSDRFEVEERDPPSPLLQMLENNSKSVIGENWTTCLHSSLVDNLGKYRKYDGSKILDILRVLRNKRHHYQDLPESVRRVLGDLPDGFTSYFVEKFPMLLLHCYHLVKDVLYEESQFKRYLEY.

Positions 1 to 30 (MKSLKGRLLFLRKFVFFSLLILLFAHGASS) are cleaved as a signal peptide. Over 31–518 (SSSSFNYFDK…LDPNPISSTP (488 aa)) the chain is Lumenal. Positions 243–262 (NLGTKRDSVPSGADSDLSFK) are disordered. The helical transmembrane segment at 519–539 (ISITFWVIMFLSVSFTIVTFF) threads the bilayer. Residues 540-1072 (SILRIRSSEV…ESQFKRYLEY (533 aa)) are Cytoplasmic-facing. The disordered stretch occupies residues 553–593 (KSQKNTVSINNKIDTSKRRRKGKRRKRVSDEHSASSNFNEI). The span at 554–565 (SQKNTVSINNKI) shows a compositional bias: polar residues. Residues 569 to 579 (KRRRKGKRRKR) show a composition bias toward basic residues. Residues 654-938 (TVYPEVIGYG…IEVVLNHPLF (285 aa)) form the Protein kinase domain. ATP is bound by residues 660 to 668 (IGYGSHGTI) and lysine 682. Residues serine 664, lysine 682, glutamate 726, cysteine 728, and asparagine 731 each coordinate ADP. The Proton acceptor role is filled by aspartate 774. Mg(2+) is bound by residues asparagine 779 and aspartate 801. In terms of domain architecture, KEN spans 941–1072 (YAKKLDFLID…ESQFKRYLEY (132 aa)).

The protein belongs to the protein kinase superfamily. Ser/Thr protein kinase family. Mg(2+) serves as cofactor. Autophosphorylated mainly on serine residues; phosphorylation enables nucleotide binding by the active site.

It is found in the endoplasmic reticulum membrane. The enzyme catalyses L-seryl-[protein] + ATP = O-phospho-L-seryl-[protein] + ADP + H(+). The catalysed reaction is L-threonyl-[protein] + ATP = O-phospho-L-threonyl-[protein] + ADP + H(+). Functionally, endoplasmic reticulum (ER) membrane-resident kinase/endoribonuclease involved in unfolded protein response (UPR). Initiates the selective decay of a subset of ER-localized-mRNAs that is required to survive ER stress. Rather than relying on a transcriptional program to up-regulate genes that enhance ER protein folding capacity as in S.cerevisiae, S.pombe cells reduce the amount of specific proteins entering the organelle by decreasing the level of ER-targeted mRNAs using ire1-dependent mRNA degradation. The sole mRNA cleaved upon ire1 activation that escapes decay is the ER chaperone bip1 mRNA which is more stable and hence is present at an increased steady-state after ire1 cleavage. Promotes ER stress-induced ER-phagy and via up-regulation of the protein level of the ER-phagy receptor epr1. The chain is Sensor for unfolded proteins in the ER ire1 (ire1) from Schizosaccharomyces pombe (strain 972 / ATCC 24843) (Fission yeast).